The chain runs to 256 residues: MTSDALKADPNRLIKIIASLSSTRELLSPEVTKADALEIRLDLITEPIDDALHSLRTSFQGPMVLTVRSSDEGGAYAGGSAGLWKKLEPYIGLVDIIDLEIRFKDHAPQVKEHNKAIIASCHQNRMPDDDEMQALIEELHSFGDIVKIAVQPQTKEDVIRLLKITAACPYPIIMSVTGTVYRYARPLLCLFGSLYTYCYIHSETSPGQYSLREMQLLAHLLSPGFVDPWFEGRPVRSGDASGYYERAEQYRKHLEF.

3-dehydroquinate contacts are provided by residues Ser19, 38 to 40 (EIR), and Arg68. The Proton donor/acceptor role is filled by His122. Lys147 acts as the Schiff-base intermediate with substrate in catalysis. 3-dehydroquinate is bound by residues Arg185, Thr204, and Gln208.

It belongs to the type-I 3-dehydroquinase family. In terms of assembly, homodimer.

It catalyses the reaction 3-dehydroquinate = 3-dehydroshikimate + H2O. It functions in the pathway metabolic intermediate biosynthesis; chorismate biosynthesis; chorismate from D-erythrose 4-phosphate and phosphoenolpyruvate: step 3/7. In terms of biological role, involved in the third step of the chorismate pathway, which leads to the biosynthesis of aromatic amino acids. Catalyzes the cis-dehydration of 3-dehydroquinate (DHQ) and introduces the first double bond of the aromatic ring to yield 3-dehydroshikimate. This is 3-dehydroquinate dehydratase from Methanospirillum hungatei JF-1 (strain ATCC 27890 / DSM 864 / NBRC 100397 / JF-1).